Reading from the N-terminus, the 101-residue chain is Phosphoribosyl-AMP cyclohydrolase (101 aa).

Position 71 (aspartate 71) interacts with Mg(2+). Cysteine 72 lines the Zn(2+) pocket. Positions 73 and 75 each coordinate Mg(2+). The Zn(2+) site is built by cysteine 88 and cysteine 95.

The protein belongs to the PRA-CH family. As to quaternary structure, homodimer. The cofactor is Mg(2+). Zn(2+) serves as cofactor.

The protein resides in the cytoplasm. It carries out the reaction 1-(5-phospho-beta-D-ribosyl)-5'-AMP + H2O = 1-(5-phospho-beta-D-ribosyl)-5-[(5-phospho-beta-D-ribosylamino)methylideneamino]imidazole-4-carboxamide. It participates in amino-acid biosynthesis; L-histidine biosynthesis; L-histidine from 5-phospho-alpha-D-ribose 1-diphosphate: step 3/9. Its function is as follows. Catalyzes the hydrolysis of the adenine ring of phosphoribosyl-AMP. The polypeptide is Phosphoribosyl-AMP cyclohydrolase (Bacillus cytotoxicus (strain DSM 22905 / CIP 110041 / 391-98 / NVH 391-98)).